Consider the following 394-residue polypeptide: Elongation factor Tu (394 aa).

In terms of domain architecture, tr-type G spans 10 to 204 (KPHINVGTIG…AMDNYIPIPE (195 aa)). Residues 19 to 26 (GHVDHGKT) form a G1 region. 19 to 26 (GHVDHGKT) lines the GTP pocket. T26 contacts Mg(2+). Residues 60 to 64 (GITIN) are G2. The interval 81 to 84 (DCPG) is G3. Residues 81-85 (DCPGH) and 136-139 (NKVD) each bind GTP. The interval 136–139 (NKVD) is G4. Positions 174–176 (SAL) are G5.

This sequence belongs to the TRAFAC class translation factor GTPase superfamily. Classic translation factor GTPase family. EF-Tu/EF-1A subfamily. In terms of assembly, monomer.

It localises to the cytoplasm. The catalysed reaction is GTP + H2O = GDP + phosphate + H(+). GTP hydrolase that promotes the GTP-dependent binding of aminoacyl-tRNA to the A-site of ribosomes during protein biosynthesis. In Methylacidiphilum infernorum (isolate V4) (Methylokorus infernorum (strain V4)), this protein is Elongation factor Tu.